Consider the following 562-residue polypeptide: Oxygen-dependent choline dehydrogenase (562 aa).

4 to 33 (DYIIIGAGSAGNVLATRLTEDPNTSVLLLE) contacts FAD. Catalysis depends on His-473, which acts as the Proton acceptor.

This sequence belongs to the GMC oxidoreductase family. FAD is required as a cofactor.

It is found in the cell membrane. It catalyses the reaction choline + A = betaine aldehyde + AH2. The enzyme catalyses betaine aldehyde + NAD(+) + H2O = glycine betaine + NADH + 2 H(+). The protein operates within amine and polyamine biosynthesis; betaine biosynthesis via choline pathway; betaine aldehyde from choline (cytochrome c reductase route): step 1/1. Functionally, involved in the biosynthesis of the osmoprotectant glycine betaine. Catalyzes the oxidation of choline to betaine aldehyde and betaine aldehyde to glycine betaine at the same rate. This Escherichia coli O157:H7 protein is Oxygen-dependent choline dehydrogenase.